Consider the following 352-residue polypeptide: Ubiquitin thioesterase otulin (352 aa).

The disordered stretch occupies residues methionine 1 to alanine 49. Over residues alanine 18–arginine 30 the composition is skewed to low complexity. Residues alanine 49–arginine 73 are a coiled coil. A PIM motif motif is present at residues glutamate 52–arginine 57. Tyrosine 56 bears the Phosphotyrosine mark. Linear diubiquitin binding stretches follow at residues glutamate 95–tryptophan 96 and arginine 124–aspartate 126. Positions threonine 118 to valine 346 constitute an OTU domain. The active site involves aspartate 126. Cysteine 129 functions as the Nucleophile in the catalytic mechanism. 3 linear diubiquitin binding regions span residues phenylalanine 255–leucine 259, threonine 283–valine 289, and aspartate 336–arginine 338. Histidine 339 is an active-site residue. The short motif at glutamate 349–valine 352 is the PDZ-binding element.

This sequence belongs to the peptidase C65 family. Otulin subfamily. In terms of assembly, interacts (via the PUB domain) with RNF31 (via the PIM motif); the interaction is direct. Interacts with DVL2. In terms of processing, ubiquitinated. Post-translationally, acetylated. Phosphorylated. Phosphorylation at Tyr-56 prevents interaction with RNF31; dephosphorylation promotes interaction with RNF31 and the LUBAC complex.

It is found in the cytoplasm. The enzyme catalyses Thiol-dependent hydrolysis of ester, thioester, amide, peptide and isopeptide bonds formed by the C-terminal Gly of ubiquitin (a 76-residue protein attached to proteins as an intracellular targeting signal).. Functionally, deubiquitinase that specifically removes linear ('Met-1'-linked) polyubiquitin chains to substrates and acts as a regulator of angiogenesis and innate immune response. Required during angiogenesis, craniofacial and neuronal development by regulating the canonical Wnt signaling together with the LUBAC complex. Acts as a negative regulator of NF-kappa-B by regulating the activity of the LUBAC complex. OTULIN function is mainly restricted to homeostasis of the LUBAC complex: acts by removing 'Met-1'-linked autoubiquitination of the LUBAC complex, thereby preventing inactivation of the LUBAC complex. Acts as a key negative regulator of inflammation by restricting spontaneous inflammation and maintaining immune homeostasis. In myeloid cell, required to prevent unwarranted secretion of cytokines leading to inflammation and autoimmunity by restricting linear polyubiquitin formation. Plays a role in innate immune response by restricting linear polyubiquitin formation on LUBAC complex in response to NOD2 stimulation, probably to limit NOD2-dependent pro-inflammatory signaling. The protein is Ubiquitin thioesterase otulin of Mus musculus (Mouse).